The following is a 362-amino-acid chain: UDP-galactose transporter homolog 1 (362 aa).

5 helical membrane-spanning segments follow: residues 7 to 27, 45 to 65, 111 to 131, 141 to 161, and 175 to 195; these read IFPV…WALV, CPNV…YFYM, LTYM…HLII, SVVA…GSKG, and FFQK…DGLT. N-linked (GlcNAc...) asparagine glycosylation is present at asparagine 196. A run of 4 helical transmembrane segments spans residues 234 to 254, 271 to 291, 296 to 316, and 317 to 337; these read HMMF…LLVI, IIVS…CFIF, LYGS…SMLL, and SIIV…VIVF.

This sequence belongs to the nucleotide-sugar transporter family. SLC35B subfamily.

The protein resides in the endoplasmic reticulum membrane. Functionally, may be involved in specific transport of UDP-Gal from the cytosol to the Golgi lumen. Involved in the maintenance of optimal conditions for the folding of secretory pathway proteins in the endoplasmic reticulum. The sequence is that of UDP-galactose transporter homolog 1 (HUT1) from Candida glabrata (strain ATCC 2001 / BCRC 20586 / JCM 3761 / NBRC 0622 / NRRL Y-65 / CBS 138) (Yeast).